The chain runs to 159 residues: Ribosomal RNA large subunit methyltransferase H (159 aa).

Residues leucine 76, glycine 108, and 127-132 (FSKMTL) contribute to the S-adenosyl-L-methionine site.

The protein belongs to the RNA methyltransferase RlmH family. As to quaternary structure, homodimer.

The protein resides in the cytoplasm. It carries out the reaction pseudouridine(1915) in 23S rRNA + S-adenosyl-L-methionine = N(3)-methylpseudouridine(1915) in 23S rRNA + S-adenosyl-L-homocysteine + H(+). Specifically methylates the pseudouridine at position 1915 (m3Psi1915) in 23S rRNA. This chain is Ribosomal RNA large subunit methyltransferase H, found in Bacillus cereus (strain ATCC 10987 / NRS 248).